The primary structure comprises 2514 residues: Probable polyketide synthase 8/35 (2514 aa).

A Ketosynthase family 3 (KS3) domain is found at 11–442 (DKGVAIVGVG…GSNCCLLISE (432 aa)). Residues Cys-181, His-323, and His-362 each act as for beta-ketoacyl synthase activity in the active site. The tract at residues 635–668 (GVNPSFILGHSLGEISAAYCSGMIDLDTFCYTVY) is acyl/malonyl transferase. Ser-645 acts as the For acyl/malonyl transferase activity in catalysis. Positions 925 to 1047 (IDHLGLSNSY…ANFQLLDHGN (123 aa)) are N-terminal hotdog fold. Residues 925-1209 (IDHLGLSNSY…FKSLIPIKHS (285 aa)) enclose the PKS/mFAS DH domain. His-959 functions as the Proton acceptor; for dehydratase activity in the catalytic mechanism. The C-terminal hotdog fold stretch occupies residues 1064–1209 (NLSKLTKNEL…FKSLIPIKHS (146 aa)). Asp-1122 acts as the Proton donor; for dehydratase activity in catalysis. Positions 2431-2508 (IGNKNIDELF…ISIKMILNSL (78 aa)) constitute a Carrier domain. Ser-2468 is subject to O-(pantetheine 4'-phosphoryl)serine.

Pantetheine 4'-phosphate serves as cofactor.

Probable polyketide synthase. This Dictyostelium discoideum (Social amoeba) protein is Probable polyketide synthase 8/35 (pks8).